Here is a 206-residue protein sequence, read N- to C-terminus: Tumor protein D54 (206 aa).

Met1 carries the N-acetylmethionine modification. The segment covering 1-14 (MDSAGQDINLNSPN) has biased composition (polar residues). Residues 1 to 24 (MDSAGQDINLNSPNKGLLSDSMTD) are disordered. A phosphoserine mark is found at Ser3, Ser12, Ser19, and Ser21. The stretch at 38 to 82 (VEGLTEAEEEELRAELTKVEEEIVTLRQVLAAKERHCGELKRRLG) forms a coiled coil. Phosphoserine occurs at positions 96, 149, and 161. The residue at position 163 (Thr163) is a Phosphothreonine. Ser166 is subject to Phosphoserine. Residue Thr173 is modified to Phosphothreonine. A compositionally biased stretch (basic and acidic residues) spans 175–185 (KSKVVGDRENG). The interval 175 to 206 (KSKVVGDRENGSDNLPSSAGSGDKPLSDPAPF) is disordered. 2 positions are modified to phosphoserine: Ser192 and Ser195.

The protein belongs to the TPD52 family. In terms of assembly, forms a homodimer or heterodimer with other members of the family. Interacts with MAL2.

This Homo sapiens (Human) protein is Tumor protein D54 (TPD52L2).